A 235-amino-acid chain; its full sequence is Vinculin (235 aa).

This sequence belongs to the vinculin/alpha-catenin family. Exhibits self-association properties. Post-translationally, phosphorylated on serines, threonines and tyrosines. In terms of processing, acetylated by myristic acid and/or palmitic acid.

The protein localises to the cell membrane. It is found in the cell junction. Its subcellular location is the adherens junction. It localises to the focal adhesion. The protein resides in the cytoplasm. The protein localises to the cytoskeleton. It is found in the sarcolemma. Its subcellular location is the cell projection. It localises to the podosome. Its function is as follows. Involved in cell adhesion. May be involved in the attachment of the actin-based microfilaments to the plasma membrane. This Xenopus laevis (African clawed frog) protein is Vinculin (vcl).